An 810-amino-acid polypeptide reads, in one-letter code: Hemoglobin-haptoglobin utilization protein B (810 aa).

Positions 1-22 (MPIPFKPVLAAAAIAQAFPAFA) are cleaved as a signal peptide. The TBDR plug domain maps to 34–166 (NEITVTGTHK…LGGAVNYQTK (133 aa)). A TBDR beta-barrel domain is found at 175-810 (DKPYHLGIKG…SYNFTIEAKF (636 aa)). The TonB C-terminal box motif lies at 793–810 (QRFTSPGRSYNFTIEAKF).

This sequence belongs to the TonB-dependent receptor family.

The protein resides in the cell outer membrane. In terms of biological role, acts as a receptor for hemoglobin or the hemoglobin/haptoglobin complex and is required for heme uptake. In Neisseria meningitidis serogroup A / serotype 4A (strain DSM 15465 / Z2491), this protein is Hemoglobin-haptoglobin utilization protein B (hpuB).